Consider the following 708-residue polypeptide: Polyribonucleotide nucleotidyltransferase (708 aa).

2 residues coordinate Mg(2+): Asp-486 and Asp-492. Residues 553–612 form the KH domain; the sequence is PRIIKFKINPEKIRDVIGKGGAVIRALTEETGTTIDISDDGSVTIACVSSEGGEQARKRI. The region spanning 622 to 690 is the S1 motif domain; the sequence is GRIYEGTVLK…EKGRLRLSMK (69 aa).

The protein belongs to the polyribonucleotide nucleotidyltransferase family. The cofactor is Mg(2+).

It is found in the cytoplasm. The enzyme catalyses RNA(n+1) + phosphate = RNA(n) + a ribonucleoside 5'-diphosphate. Involved in mRNA degradation. Catalyzes the phosphorolysis of single-stranded polyribonucleotides processively in the 3'- to 5'-direction. The polypeptide is Polyribonucleotide nucleotidyltransferase (Nitrosomonas europaea (strain ATCC 19718 / CIP 103999 / KCTC 2705 / NBRC 14298)).